The primary structure comprises 471 residues: Putative multidrug resistance protein MdtD (471 aa).

Over M1–Q11 the chain is Periplasmic. Residues L12–A32 form a helical membrane-spanning segment. Residues L33–H48 are Cytoplasmic-facing. The helical transmembrane segment at M49 to A69 threads the bilayer. The Periplasmic portion of the chain corresponds to D70–N76. The helical transmembrane segment at I77 to T97 threads the bilayer. Over L98–L101 the chain is Cytoplasmic. The chain crosses the membrane as a helical span at residues L102–M124. The Periplasmic segment spans residues K125 to T137. A helical membrane pass occupies residues F138–V158. The Cytoplasmic portion of the chain corresponds to E159–H164. Residues W165 to M185 traverse the membrane as a helical segment. Topologically, residues P186–D196 are periplasmic. A helical transmembrane segment spans residues L197 to S217. The Cytoplasmic segment spans residues K218–P224. Residues L225 to A245 form a helical membrane-spanning segment. Over R246–T262 the chain is Periplasmic. The chain crosses the membrane as a helical span at residues F263–M283. Over T284–P285 the chain is Cytoplasmic. Residues V286 to M306 traverse the membrane as a helical segment. Topologically, residues V307–T341 are periplasmic. Residues L342–L362 traverse the membrane as a helical segment. Residues Q363 to S395 are Cytoplasmic-facing. The chain crosses the membrane as a helical span at residues M396 to F416. Over G417–T430 the chain is Periplasmic. A helical transmembrane segment spans residues V431–A451. The Cytoplasmic segment spans residues R452–Q471.

This sequence belongs to the major facilitator superfamily. TCR/Tet family.

The protein resides in the cell inner membrane. This is Putative multidrug resistance protein MdtD from Escherichia coli (strain K12 / MC4100 / BW2952).